A 652-amino-acid polypeptide reads, in one-letter code: Acetyl-coenzyme A synthetase (652 aa).

Residues arginine 191 to arginine 194, threonine 311, and asparagine 335 contribute to the CoA site. ATP contacts are provided by residues glycine 387 to proline 389, aspartate 411 to threonine 416, aspartate 500, and arginine 515. Serine 523 contributes to the CoA binding site. Arginine 526 contributes to the ATP binding site. 3 residues coordinate Mg(2+): valine 537, histidine 539, and isoleucine 542. Arginine 584 contacts CoA. Position 609 is an N6-acetyllysine (lysine 609).

This sequence belongs to the ATP-dependent AMP-binding enzyme family. Mg(2+) is required as a cofactor. Acetylated. Deacetylation by the SIR2-homolog deacetylase activates the enzyme.

It carries out the reaction acetate + ATP + CoA = acetyl-CoA + AMP + diphosphate. Functionally, catalyzes the conversion of acetate into acetyl-CoA (AcCoA), an essential intermediate at the junction of anabolic and catabolic pathways. Acs undergoes a two-step reaction. In the first half reaction, Acs combines acetate with ATP to form acetyl-adenylate (AcAMP) intermediate. In the second half reaction, it can then transfer the acetyl group from AcAMP to the sulfhydryl group of CoA, forming the product AcCoA. Its function is as follows. Enables the cell to use acetate during aerobic growth to generate energy via the TCA cycle, and biosynthetic compounds via the glyoxylate shunt. Acetylates CheY, the response regulator involved in flagellar movement and chemotaxis. This is Acetyl-coenzyme A synthetase from Cronobacter sakazakii (strain ATCC BAA-894) (Enterobacter sakazakii).